Reading from the N-terminus, the 207-residue chain is Protein FMP32, mitochondrial (207 aa).

Positions 100-136 (ADRSEFHNIQNEYESVKNDLEKLRNKLREEITKTNAG) form a coiled coil. Residues 184–206 (VMQWLIGVCTGTFALVLAYMRLL) traverse the membrane as a helical segment.

It belongs to the CCDC90 family.

The protein localises to the mitochondrion. Its subcellular location is the membrane. The protein is Protein FMP32, mitochondrial (FMP32) of Saccharomyces cerevisiae (strain ATCC 204508 / S288c) (Baker's yeast).